Consider the following 254-residue polypeptide: Type III pantothenate kinase 2 (254 aa).

6 to 13 (DMGNSHIH) is a binding site for ATP. 107 to 110 (GADR) lines the substrate pocket. Residue Asp-109 is the Proton acceptor of the active site. Residue Asp-130 participates in K(+) binding. Thr-133 lines the ATP pocket. Thr-185 contacts substrate.

It belongs to the type III pantothenate kinase family. As to quaternary structure, homodimer. The cofactor is NH4(+). K(+) is required as a cofactor.

The protein localises to the cytoplasm. It catalyses the reaction (R)-pantothenate + ATP = (R)-4'-phosphopantothenate + ADP + H(+). Its pathway is cofactor biosynthesis; coenzyme A biosynthesis; CoA from (R)-pantothenate: step 1/5. Its function is as follows. Catalyzes the phosphorylation of pantothenate (Pan), the first step in CoA biosynthesis. This Francisella tularensis subsp. holarctica (strain LVS) protein is Type III pantothenate kinase 2.